Consider the following 103-residue polypeptide: Cyclotide vitri-A (103 aa).

Residues 1–9 form the signal peptide; sequence AAFALPAFA. A propeptide spanning residues 10 to 69 is cleaved from the precursor; it reads SFEKDVITPAALEAVLNRKAPLSNIMMENDAIVNVIANVKTVISNPVLEEALLKTNHGVN. Residues 70–99 constitute a cross-link (cyclopeptide (Gly-Asn)); sequence GIPCGESCVWIPCITSAIGCSCKSKVCYRN. Intrachain disulfides connect Cys73-Cys89, Cys77-Cys91, and Cys82-Cys96. The propeptide occupies 100–103; it reads SLDN.

Post-translationally, this is a cyclic peptide.

In terms of biological role, probably participates in a plant defense mechanism. This chain is Cyclotide vitri-A, found in Viola biflora (Yellow wood violet).